A 65-amino-acid chain; its full sequence is Large ribosomal subunit protein bL35 (65 aa).

A compositionally biased stretch (basic residues) spans 1–15 (MPKMKTKKSASKRFT). Residues 1 to 27 (MPKMKTKKSASKRFTARPNGSFKRGQA) form a disordered region.

It belongs to the bacterial ribosomal protein bL35 family.

The chain is Large ribosomal subunit protein bL35 from Cupriavidus pinatubonensis (strain JMP 134 / LMG 1197) (Cupriavidus necator (strain JMP 134)).